The chain runs to 730 residues: Probable palmitoyltransferase AKR2 (730 aa).

ANK repeat units lie at residues 32 to 62, 66 to 95, 100 to 129, 133 to 166, 172 to 201, and 205 to 234; these read FVVE…DINK, DELP…NVNQ, ERAT…NPTL, QGLN…NVDI, NNRT…TVAL, and RGFN…NFYE. The next 4 membrane-spanning stretches (helical) occupy residues 283–303, 309–328, 344–364, and 376–396; these read LMIF…SLIL, IALS…KFVL, TPFF…IWVK, and AKDA…LKLV. Residues 429-479 form the DHHC domain; it reads NFCVETLERKPLRSKYSLFSGALVARFNHYCPWVYNDIGLKNHKLFMFFAF. The active-site S-palmitoyl cysteine intermediate is the Cys-459. Helical transmembrane passes span 473–493 and 530–550; these read LFMF…WLCL and TFFL…MLIV.

Belongs to the DHHC palmitoyltransferase family. AKR/ZDHHC17 subfamily.

It localises to the membrane. The catalysed reaction is L-cysteinyl-[protein] + hexadecanoyl-CoA = S-hexadecanoyl-L-cysteinyl-[protein] + CoA. This is Probable palmitoyltransferase AKR2 (AKR2) from Saccharomyces uvarum (strain ATCC 76518 / CBS 7001 / CLIB 283 / NBRC 10550 / MCYC 623 / NCYC 2669 / NRRL Y-11845) (Yeast).